A 243-amino-acid polypeptide reads, in one-letter code: MSSGTELLWPGAALLVLLGVAASLCVRCSRPGAKRSEKIYQQRSLREDQQSFTGSRTYSLVGQAWPGPLADMAPTRKDKLLQFYPSLEDPASSRYQNFSKGSRHGSEEAYIDPIAMEYYNWGRFSKPPEDDDANSYENVLICKQKTTETGAQQEGIGGLCRGDLSLSLALKTGPTSGLCPSASPEEDEESEDYQNSASIHQWRESRKVMGQLQREASPGPVGSPDEEDGEPDYVNGEVAATEA.

The Extracellular portion of the chain corresponds to 1–5 (MSSGT). The chain crosses the membrane as a helical; Signal-anchor for type III membrane protein span at residues 6 to 26 (ELLWPGAALLVLLGVAASLCV). Residues Cys25 and Cys28 are each lipidated (S-palmitoyl cysteine). Over 27–243 (RCSRPGAKRS…VNGEVAATEA (217 aa)) the chain is Cytoplasmic. Ser44 carries the post-translational modification Phosphoserine. Phosphotyrosine is present on Tyr58. A phosphoserine mark is found at Ser59 and Ser92. Phosphotyrosine is present on residues Tyr136, Tyr193, and Tyr233. Positions 174–243 (PTSGLCPSAS…VNGEVAATEA (70 aa)) are disordered.

When phosphorylated, interacts with GRB2. May also interact with SOS1, GAB1 and CBL. Post-translationally, phosphorylated on tyrosines following cross-linking of BCR in B-cells, FCGR1 in myeloid cells, or FCER1 in mast cells; which induces the recruitment of GRB2. In terms of processing, may be polyubiquitinated. In terms of tissue distribution, highly expressed in spleen, peripheral blood lymphocytes, and germinal centers of lymph nodes. Also expressed in placenta, lung, pancreas and small intestine. Present in B-cells, NK cells and monocytes. Absent from T-cells (at protein level).

Its subcellular location is the cell membrane. In terms of biological role, involved in FCER1 (high affinity immunoglobulin epsilon receptor)-mediated signaling in mast cells. May also be involved in BCR (B-cell antigen receptor)-mediated signaling in B-cells and FCGR1 (high affinity immunoglobulin gamma Fc receptor I)-mediated signaling in myeloid cells. Couples activation of these receptors and their associated kinases with distal intracellular events through the recruitment of GRB2. The protein is Linker for activation of T-cells family member 2 (LAT2) of Homo sapiens (Human).